The following is a 45-amino-acid chain: Photosystem II reaction center protein K (45 aa).

Positions 1–8 are excised as a propeptide; that stretch reads MDVNFLLS. The helical transmembrane segment at 20-40 threads the bilayer; that stretch reads IVDVMPAIPVFFLLLAFVWQA.

The protein belongs to the PsbK family. PSII is composed of 1 copy each of membrane proteins PsbA, PsbB, PsbC, PsbD, PsbE, PsbF, PsbH, PsbI, PsbJ, PsbK, PsbL, PsbM, PsbT, PsbX, PsbY, PsbZ, Psb30/Ycf12, at least 3 peripheral proteins of the oxygen-evolving complex and a large number of cofactors. It forms dimeric complexes.

The protein localises to the plastid. The protein resides in the chloroplast thylakoid membrane. One of the components of the core complex of photosystem II (PSII). PSII is a light-driven water:plastoquinone oxidoreductase that uses light energy to abstract electrons from H(2)O, generating O(2) and a proton gradient subsequently used for ATP formation. It consists of a core antenna complex that captures photons, and an electron transfer chain that converts photonic excitation into a charge separation. The chain is Photosystem II reaction center protein K from Emiliania huxleyi (Coccolithophore).